Here is a 507-residue protein sequence, read N- to C-terminus: Histone-lysine N-methyltransferase set-18 (507 aa).

Zn(2+)-binding residues include cysteine 49, cysteine 52, cysteine 65, cysteine 68, cysteine 74, cysteine 78, histidine 86, and cysteine 90. The MYND-type zinc-finger motif lies at 49–90 (CANCLRGPAPGEKLLRCGGCNFSMYCSKECQATAWLVHKPEC).

This sequence belongs to the class V-like SAM-binding methyltransferase superfamily. Histone-lysine methyltransferase family. Expressed in pharyngeal and body wall muscles.

The catalysed reaction is L-lysyl(36)-[histone H3] + 2 S-adenosyl-L-methionine = N(6),N(6)-dimethyl-L-lysyl(36)-[histone H3] + 2 S-adenosyl-L-homocysteine + 2 H(+). Functionally, histone methyltransferase. Specifically methylates 'Lys-36' of histone H3, inducing di-methylation. Plays a role in modulating lifespan and oxidative stress resistance, in a manner dependent upon daf-16/Forkhead box protein O and the Insulin/IGF-1-like signaling (IIS) mediated pathway. Represses transcription of daf-16 isoform a, perhaps by methylating histone H3 at the daf-16 promoter, which in turn leads to recruitment of histone deacetylases and thus modulation of expression. This Caenorhabditis elegans protein is Histone-lysine N-methyltransferase set-18.